Reading from the N-terminus, the 392-residue chain is DNA replication and repair protein RecF (392 aa).

33–40 is a binding site for ATP; it reads GANGAGKT.

The protein belongs to the RecF family.

It is found in the cytoplasm. In terms of biological role, the RecF protein is involved in DNA metabolism; it is required for DNA replication and normal SOS inducibility. RecF binds preferentially to single-stranded, linear DNA. It also seems to bind ATP. The polypeptide is DNA replication and repair protein RecF (Caulobacter sp. (strain K31)).